The chain runs to 397 residues: Ribosomal RNA large subunit methyltransferase I (397 aa).

In terms of domain architecture, PUA spans 2-79 (TAAIYLVKGR…KEEINKAFFV (78 aa)).

This sequence belongs to the methyltransferase superfamily. RlmI family.

Its subcellular location is the cytoplasm. It carries out the reaction cytidine(1962) in 23S rRNA + S-adenosyl-L-methionine = 5-methylcytidine(1962) in 23S rRNA + S-adenosyl-L-homocysteine + H(+). Functionally, specifically methylates the cytosine at position 1962 (m5C1962) of 23S rRNA. The protein is Ribosomal RNA large subunit methyltransferase I of Vibrio campbellii (strain ATCC BAA-1116).